Consider the following 261-residue polypeptide: Phosphoribosylaminoimidazole-succinocarboxamide synthase (261 aa).

It belongs to the SAICAR synthetase family.

It catalyses the reaction 5-amino-1-(5-phospho-D-ribosyl)imidazole-4-carboxylate + L-aspartate + ATP = (2S)-2-[5-amino-1-(5-phospho-beta-D-ribosyl)imidazole-4-carboxamido]succinate + ADP + phosphate + 2 H(+). It functions in the pathway purine metabolism; IMP biosynthesis via de novo pathway; 5-amino-1-(5-phospho-D-ribosyl)imidazole-4-carboxamide from 5-amino-1-(5-phospho-D-ribosyl)imidazole-4-carboxylate: step 1/2. The chain is Phosphoribosylaminoimidazole-succinocarboxamide synthase from Novosphingobium aromaticivorans (strain ATCC 700278 / DSM 12444 / CCUG 56034 / CIP 105152 / NBRC 16084 / F199).